The sequence spans 284 residues: Tropomyosin alpha-1 chain (284 aa).

Positions 1–38 (MDAIKKKMQMLKLDKENALDRAEQAEADKKAAEERSKQ) are disordered. A coiled-coil region spans residues 1-284 (MDAIKKKMQM…DHALNDMTSI (284 aa)). Over residues 12–38 (KLDKENALDRAEQAEADKKAAEERSKQ) the composition is skewed to basic and acidic residues.

The protein belongs to the tropomyosin family. In terms of assembly, homodimer. Heterodimer of an alpha (TPM1, TPM3 or TPM4) and a beta (TPM2) chain. Interacts with HRG (via the HRR domain); the interaction contributes to the antiangiogenic properties of the histidine/proline-rich region (HRR) of HRG.

The protein localises to the cytoplasm. It is found in the cytoskeleton. Its function is as follows. Binds to actin filaments in muscle and non-muscle cells. Plays a central role, in association with the troponin complex, in the calcium dependent regulation of vertebrate striated muscle contraction. Smooth muscle contraction is regulated by interaction with caldesmon. In non-muscle cells is implicated in stabilizing cytoskeleton actin filaments. The chain is Tropomyosin alpha-1 chain (TPM1) from Coturnix japonica (Japanese quail).